The chain runs to 187 residues: METLTSSSQSLISSPMSKKDYSSEIICAFDIGAKNPARTVLEVKDNSVRVLDISKLDWSSDWERRIAKDLSQYEYTTVLLERQPRRSPYVKFIYFIKGFLYHTSATKVICVSPVMSGNSYRDRKKRSVEAFFDWMDIFGLRDSVPDRRKLDDVADSFNLAMRYVLDKWNTNYTHYNRCKSRNYIKKM.

It belongs to the RuvC family. Poxviruses-type subfamily. The cofactor is Mg(2+).

Plays a role in DNA replication by cleaving viral DNA concatamers to yield unit-length viral genomes. The concatamer junctions contain inverted repeat sequences that can be extruded as cruciforms, yielding Holliday junctions that A22 protein cleaves. The protein is Resolvase OPG149 (OPG149) of Variola virus (isolate Human/India/Ind3/1967) (VARV).